A 118-amino-acid chain; its full sequence is Lutropin subunit beta (118 aa).

Cystine bridges form between Cys-9/Cys-57, Cys-23/Cys-72, Cys-26/Cys-110, Cys-34/Cys-88, Cys-38/Cys-90, and Cys-93/Cys-100. Residue Asn-13 is glycosylated (N-linked (GlcNAc...) asparagine).

Belongs to the glycoprotein hormones subunit beta family. In terms of assembly, heterodimer of a common alpha chain and a unique beta chain which confers biological specificity to thyrotropin, lutropin, follitropin and gonadotropin.

Its subcellular location is the secreted. Its function is as follows. Promotes spermatogenesis and ovulation by stimulating the testes and ovaries to synthesize steroids. This chain is Lutropin subunit beta (LHB), found in Balaenoptera acutorostrata (Common minke whale).